Consider the following 566-residue polypeptide: Alpha-amylase (566 aa).

Positions Met1–Ala28 are cleaved as a signal peptide. Residues Asn120, Gln166, and Asp175 each contribute to the Ca(2+) site. Asp205 serves as the catalytic Nucleophile. His209 is a Ca(2+) binding site. Glu232 (proton donor) is an active-site residue. Positions Gly465 to Gly566 constitute a CBM20 domain.

The protein belongs to the glycosyl hydrolase 13 family. In terms of assembly, monomer. Ca(2+) is required as a cofactor.

The enzyme catalyses Endohydrolysis of (1-&gt;4)-alpha-D-glucosidic linkages in polysaccharides containing three or more (1-&gt;4)-alpha-linked D-glucose units.. The chain is Alpha-amylase (amy) from Streptomyces griseus.